A 290-amino-acid chain; its full sequence is ATP phosphoribosyltransferase (290 aa).

It belongs to the ATP phosphoribosyltransferase family. Long subfamily. It depends on Mg(2+) as a cofactor.

The protein resides in the cytoplasm. It catalyses the reaction 1-(5-phospho-beta-D-ribosyl)-ATP + diphosphate = 5-phospho-alpha-D-ribose 1-diphosphate + ATP. The protein operates within amino-acid biosynthesis; L-histidine biosynthesis; L-histidine from 5-phospho-alpha-D-ribose 1-diphosphate: step 1/9. Feedback inhibited by histidine. Functionally, catalyzes the condensation of ATP and 5-phosphoribose 1-diphosphate to form N'-(5'-phosphoribosyl)-ATP (PR-ATP). Has a crucial role in the pathway because the rate of histidine biosynthesis seems to be controlled primarily by regulation of HisG enzymatic activity. This is ATP phosphoribosyltransferase (hisG) from Saccharolobus solfataricus (strain ATCC 35092 / DSM 1617 / JCM 11322 / P2) (Sulfolobus solfataricus).